The following is a 520-amino-acid chain: UDP-N-acetylmuramoyl-L-alanyl-D-glutamate--2,6-diaminopimelate ligase (520 aa).

Residue Leu-48 participates in UDP-N-acetyl-alpha-D-muramoyl-L-alanyl-D-glutamate binding. ATP is bound at residue 134–140 (GTSGKTT). UDP-N-acetyl-alpha-D-muramoyl-L-alanyl-D-glutamate contacts are provided by residues 176-177 (TT), Ser-203, and Arg-211. Lys-243 carries the N6-carboxylysine modification. Meso-2,6-diaminopimelate contacts are provided by residues Arg-405, 429 to 432 (DNPR), Gly-483, and Glu-487. The Meso-diaminopimelate recognition motif motif lies at 429 to 432 (DNPR).

The protein belongs to the MurCDEF family. MurE subfamily. Mg(2+) is required as a cofactor. Post-translationally, carboxylation is probably crucial for Mg(2+) binding and, consequently, for the gamma-phosphate positioning of ATP.

It localises to the cytoplasm. The enzyme catalyses UDP-N-acetyl-alpha-D-muramoyl-L-alanyl-D-glutamate + meso-2,6-diaminopimelate + ATP = UDP-N-acetyl-alpha-D-muramoyl-L-alanyl-gamma-D-glutamyl-meso-2,6-diaminopimelate + ADP + phosphate + H(+). The protein operates within cell wall biogenesis; peptidoglycan biosynthesis. Catalyzes the addition of meso-diaminopimelic acid to the nucleotide precursor UDP-N-acetylmuramoyl-L-alanyl-D-glutamate (UMAG) in the biosynthesis of bacterial cell-wall peptidoglycan. The polypeptide is UDP-N-acetylmuramoyl-L-alanyl-D-glutamate--2,6-diaminopimelate ligase (Mycolicibacterium paratuberculosis (strain ATCC BAA-968 / K-10) (Mycobacterium paratuberculosis)).